The chain runs to 694 residues: Methionine--tRNA ligase (694 aa).

The 'HIGH' region motif lies at 12–22 (PYANGPLHLGH). Zn(2+)-binding residues include cysteine 143, cysteine 146, cysteine 156, and cysteine 159. The 'KMSKS' region signature appears at 330–334 (KMSKS). Lysine 333 provides a ligand contact to ATP. Residues 550–573 (MAAPAAPATTTKPAPSKADAKPAA) are compositionally biased toward low complexity. The disordered stretch occupies residues 550–582 (MAAPAAPATTTKPAPSKADAKPAAVANPESQTT). A tRNA-binding domain is found at 591 to 694 (DFAKLDLRIG…SGAQPGMPVR (104 aa)).

This sequence belongs to the class-I aminoacyl-tRNA synthetase family. MetG type 1 subfamily. As to quaternary structure, homodimer. Zn(2+) serves as cofactor.

The protein localises to the cytoplasm. It catalyses the reaction tRNA(Met) + L-methionine + ATP = L-methionyl-tRNA(Met) + AMP + diphosphate. Its function is as follows. Is required not only for elongation of protein synthesis but also for the initiation of all mRNA translation through initiator tRNA(fMet) aminoacylation. This chain is Methionine--tRNA ligase, found in Xanthomonas euvesicatoria pv. vesicatoria (strain 85-10) (Xanthomonas campestris pv. vesicatoria).